The chain runs to 433 residues: Probable RNA 3'-terminal phosphate cyclase (433 aa).

Over residues 1–10 the composition is skewed to low complexity; sequence MGKNKNYNKN. The segment at 1–28 is disordered; sequence MGKNKNYNKNQFKKSKTNNDTTVAQQQQ. Residues 18–28 are compositionally biased toward polar residues; it reads NNDTTVAQQQQ. Residues Gln-137 and 328 to 332 contribute to the ATP site; that span reads YLQDQ. His-354 functions as the Tele-AMP-histidine intermediate in the catalytic mechanism. A disordered region spans residues 400 to 433; the sequence is LNNNNNNSNSNTTTTTTTTTISTTTIDNQNSEEK. The span at 401–425 shows a compositional bias: low complexity; the sequence is NNNNNNSNSNTTTTTTTTTISTTTI.

The protein belongs to the RNA 3'-terminal cyclase family. Type 1 subfamily.

Its subcellular location is the nucleus. It localises to the nucleoplasm. The catalysed reaction is a 3'-end 3'-phospho-ribonucleotide-RNA + ATP = a 3'-end 2',3'-cyclophospho-ribonucleotide-RNA + AMP + diphosphate. Functionally, catalyzes the conversion of 3'-phosphate to a 2',3'-cyclic phosphodiester at the end of RNA. The mechanism of action of the enzyme occurs in 3 steps: (A) adenylation of the enzyme by ATP; (B) transfer of adenylate to an RNA-N3'P to produce RNA-N3'PP5'A; (C) and attack of the adjacent 2'-hydroxyl on the 3'-phosphorus in the diester linkage to produce the cyclic end product. The biological role of this enzyme is unknown but it is likely to function in some aspects of cellular RNA processing. This is Probable RNA 3'-terminal phosphate cyclase (rtca) from Dictyostelium discoideum (Social amoeba).